Consider the following 286-residue polypeptide: MSLSFQKYQGLGNDFLLIDNRHQEELLLTPEQAQFWCDRHFGVGADGVIFLLRGTGESDYRMRMYNADGSVAQMCGNGIRCLAKFIFALEGRSAGEIVRYRIDTLAGLIVPEVQADGQVTVDMGKPRLLAQQIPTTLAAADQKVVDVPLTVGDRQWLVTCVSMGNPHCVTFVEDVAALDLAVLGPQFEHHPAFPQRTNTEFVQVLGSDRLRMRVWERGAGMTLACGTGACATLVAAVLTGCLSPGGDQAQATVELPGGDLQIRWDLPSQHLYMTGPALAVFSGTLP.

Substrate-binding residues include Asn-13 and Asn-66. Cys-75 functions as the Proton donor in the catalytic mechanism. Substrate contacts are provided by residues 76 to 77 (GN), Asn-165, Asn-198, and 216 to 217 (ER). Cys-225 acts as the Proton acceptor in catalysis. 226–227 (GT) contributes to the substrate binding site.

The protein belongs to the diaminopimelate epimerase family. Homodimer.

It localises to the cytoplasm. It catalyses the reaction (2S,6S)-2,6-diaminopimelate = meso-2,6-diaminopimelate. It participates in amino-acid biosynthesis; L-lysine biosynthesis via DAP pathway; DL-2,6-diaminopimelate from LL-2,6-diaminopimelate: step 1/1. In terms of biological role, catalyzes the stereoinversion of LL-2,6-diaminopimelate (L,L-DAP) to meso-diaminopimelate (meso-DAP), a precursor of L-lysine and an essential component of the bacterial peptidoglycan. The sequence is that of Diaminopimelate epimerase from Thermosynechococcus vestitus (strain NIES-2133 / IAM M-273 / BP-1).